The chain runs to 463 residues: Protein phosphatase PP2A regulatory subunit B (463 aa).

2 WD repeats span residues 27 to 66 (TEADIISAVEFDHTGDYLATGDKGGRVVLFERNHSKKGCE) and 87 to 128 (EIEE…LKVV). Serine 134 bears the Phosphoserine mark. 4 WD repeats span residues 174–212 (AHAYHINSISVNSDAETYISADDLRINLWNLSISDHSFN), 223–263 (ELTE…LCDN), 282–320 (EIISSISDVKFSQNGRYILSRDYLTLKIWDVNMEKAPVK), and 337–378 (ENDC…PGDR).

The protein belongs to the phosphatase 2A regulatory subunit B family. As to quaternary structure, PP2A exists in several trimeric forms, all of which consist of a core composed of a catalytic subunit associated with a 65 kDa (PR65) (Subunit A) and a 55 kDa (PR55) (Subunit B) regulatory subunit.

Functionally, phosphatase 2A affects a variety of biological processes in the cell such as transcription, cell cycle progression and cellular morphogenesis, and provides an initial identification of critical substrates for this phosphatase. The regulatory subunit may direct the catalytic subunit to distinct, albeit overlapping, subsets of substrates. The chain is Protein phosphatase PP2A regulatory subunit B (pab1) from Schizosaccharomyces pombe (strain 972 / ATCC 24843) (Fission yeast).